The sequence spans 682 residues: Solute carrier organic anion transporter family member 2B1 (682 aa).

Residues 1-30 (MPDRSTKATMGAEDIHERKVSMEPRDSHQD) are disordered. Over 1-41 (MPDRSTKATMGAEDIHERKVSMEPRDSHQDAQPRGMFQNIK) the chain is Cytoplasmic. The span at 13–30 (EDIHERKVSMEPRDSHQD) shows a compositional bias: basic and acidic residues. S21 carries the post-translational modification Phosphoserine. The chain crosses the membrane as a helical span at residues 42–61 (FFVLCHSILQLAQLMISGYL). At 62–80 (KSSISTVEKRFGLSSQTSG) the chain is on the extracellular side. The chain crosses the membrane as a helical span at residues 81-101 (LLAAFNEVGNISLILFVSYFG). At 102–107 (SRVHRP) the chain is on the cytoplasmic side. A helical transmembrane segment spans residues 108–132 (RMIGCGAILVAVAGLLMALPHFISE). The Extracellular segment spans residues 133–176 (PYRYDHSSPDRSQDFEASLCLPTTMAPASALSNDSCSSRTETKH). The N-linked (GlcNAc...) asparagine glycan is linked to N165. The helical transmembrane segment at 177-206 (LTMVGIMFTAQTLLGIGGVPIQPFGISYID) threads the bilayer. At 207–225 (DFAHHSNSPLYLGILFAIT) the chain is on the cytoplasmic side. Residues 226 to 246 (MMGPGLAYGLGSLMLRLYVDI) form a helical membrane-spanning segment. At 247 to 264 (DRMPEGGINLTTKDPRWV) the chain is on the extracellular side. The N-linked (GlcNAc...) asparagine glycan is linked to N255. Residues 265–289 (GAWWLGFLISAGLVVLAASPYFFFP) form a helical membrane-spanning segment. Residues 290–354 (REMPKEKYEL…IKVFPRVLLR (65 aa)) lie on the Cytoplasmic side of the membrane. Phosphoserine is present on residues S311 and S314. Residues 355–376 (TLRHPIFLLVVLSQVCTSSMVA) traverse the membrane as a helical segment. Topologically, residues 377–396 (GTATFLPKFLERQFSITASF) are extracellular. The chain crosses the membrane as a helical span at residues 397-420 (ANLLLGCLTIPLAIVGIVVGGVLV). The Cytoplasmic portion of the chain corresponds to 421–424 (KRLH). Residues 425 to 448 (LSPMQCSALCLLGSLLCLLLSLPL) form a helical membrane-spanning segment. The Extracellular segment spans residues 449 to 552 (FFIGCSTHHI…SACSRLVLPF (104 aa)). A Kazal-like domain is found at 471–531 (PSLFPGCSEP…VFYTNCSCVA (61 aa)). 3 disulfides stabilise this stretch: C477/C508, C483/C504, and C492/C529. N-linked (GlcNAc...) asparagine glycosylation is found at N526 and N533. Residues 553–575 (ILLISLGAAVASITHTPSFMLIL) traverse the membrane as a helical segment. Over 576-584 (RGVKKEDKT) the chain is Cytoplasmic. The chain crosses the membrane as a helical span at residues 585–610 (LAVGMQFMLLRVLAWMPSPVIHGSAI). Residues 611–643 (DTTCVHWALTCGRRAVCRYYDHDLLRNRFIGLQ) are Extracellular-facing. Residues 644–661 (FFFKSGSLVCFALVLAIL) traverse the membrane as a helical segment. Over 662–682 (RQQSREASTKATVKSSDLQEL) the chain is Cytoplasmic.

The protein belongs to the organo anion transporter (TC 2.A.60) family. Expressed in liver, kidney, heart, lung and retina. Widely distributed in all brain regions.

The protein localises to the cell membrane. It is found in the basal cell membrane. The protein resides in the apical cell membrane. The catalysed reaction is coproporphyrin III(out) = coproporphyrin III(in). It carries out the reaction substance P(out) = substance P(in). The enzyme catalyses taurocholate(out) = taurocholate(in). It catalyses the reaction prostaglandin E1(out) = prostaglandin E1(in). The catalysed reaction is prostaglandin E2(out) = prostaglandin E2(in). It carries out the reaction prostaglandin D2(out) = prostaglandin D2(in). The enzyme catalyses leukotriene C4(out) = leukotriene C4(in). It catalyses the reaction L-thyroxine(out) = L-thyroxine(in). Its function is as follows. Mediates the Na(+)-independent transport of organic anions such as taurocholate, the prostaglandins D2 (PGD2), E1 (PGE1) and E2 (PGE2), leukotriene C4, thromboxane B2 and L-thyroxine. Also plays a role in the reuptake of neuropeptides such as substance P/TAC1 and vasoactive intestinal peptide/VIP released from retinal neurons. May act as a heme transporter that promotes cellular iron availability. Also transports heme by-product coproporphyrin III (CPIII), and may be involved in their hepatic disposition. May contribute to regulate the transport of organic compounds in testis across the blood-testis-barrier. Shows a pH-sensitive substrate specificity which may be ascribed to the protonation state of the binding site and leads to a stimulation of substrate transport in an acidic microenvironment. The exact transport mechanism has not been yet deciphered but most likely involves an anion exchange, coupling the cellular uptake of organic substrate with the efflux of an anionic compound. Hydrogencarbonate/HCO3(-) acts as a probable counteranion that exchanges for organic anions. Cytoplasmic glutamate may also act as counteranion in the placenta. The protein is Solute carrier organic anion transporter family member 2B1 of Rattus norvegicus (Rat).